The sequence spans 320 residues: Malate dehydrogenase (320 aa).

Residues 10-15 (GAGQIG) and D34 contribute to the NAD(+) site. Residues R83 and R89 each coordinate substrate. Residues N96 and 119–121 (ITN) contribute to the NAD(+) site. Substrate contacts are provided by N121 and R152. The active-site Proton acceptor is the H176.

Belongs to the LDH/MDH superfamily. MDH type 3 family.

The catalysed reaction is (S)-malate + NAD(+) = oxaloacetate + NADH + H(+). In terms of biological role, catalyzes the reversible oxidation of malate to oxaloacetate. This chain is Malate dehydrogenase, found in Beijerinckia indica subsp. indica (strain ATCC 9039 / DSM 1715 / NCIMB 8712).